A 208-amino-acid chain; its full sequence is 2-phospho-L-lactate guanylyltransferase (208 aa).

The protein belongs to the CofC family. Homodimer.

The enzyme catalyses (2S)-2-phospholactate + GTP + H(+) = (2S)-lactyl-2-diphospho-5'-guanosine + diphosphate. The protein operates within cofactor biosynthesis; coenzyme F420 biosynthesis. Its function is as follows. Guanylyltransferase that catalyzes the activation of (2S)-2-phospholactate (2-PL) as (2S)-lactyl-2-diphospho-5'-guanosine, via the condensation of 2-PL with GTP. It is involved in the biosynthesis of coenzyme F420, a hydride carrier cofactor. This is 2-phospho-L-lactate guanylyltransferase from Haloarcula marismortui (strain ATCC 43049 / DSM 3752 / JCM 8966 / VKM B-1809) (Halobacterium marismortui).